The primary structure comprises 585 residues: 3-hydroxy-3-methylglutaryl-coenzyme A reductase 1 (585 aa).

Transmembrane regions (helical) follow at residues 38–58 (LYLTNAVFFTLFFSAVYFLLC) and 77–97 (EIVAILASVASFIYLLGFFGI). Positions 98 to 169 (DFVQSLVLRP…DEMPVTVMTE (72 aa)) are linker. The interval 170 to 585 (EDEEIIRSVV…SSKDVSKVSS (416 aa)) is catalytic. Residue E264 is the Charge relay system of the active site. N328 carries N-linked (GlcNAc...) asparagine glycosylation. K396 (charge relay system) is an active-site residue. A glycan (N-linked (GlcNAc...) asparagine) is linked at N441. Residue D472 is the Charge relay system of the active site. The Proton donor role is filled by H570. N574 is a glycosylation site (N-linked (GlcNAc...) asparagine).

The protein belongs to the HMG-CoA reductase family.

It localises to the endoplasmic reticulum membrane. It is found in the mitochondrion membrane. The protein resides in the plastid membrane. The enzyme catalyses (R)-mevalonate + 2 NADP(+) + CoA = (3S)-3-hydroxy-3-methylglutaryl-CoA + 2 NADPH + 2 H(+). The protein operates within metabolic intermediate biosynthesis; (R)-mevalonate biosynthesis; (R)-mevalonate from acetyl-CoA: step 3/3. Catalyzes the synthesis of mevalonate. The specific precursor of all isoprenoid compounds present in plants. In Gossypium hirsutum (Upland cotton), this protein is 3-hydroxy-3-methylglutaryl-coenzyme A reductase 1 (HMG1).